The sequence spans 133 residues: Ribosome-binding factor A (133 aa).

This sequence belongs to the RbfA family. As to quaternary structure, monomer. Binds 30S ribosomal subunits, but not 50S ribosomal subunits or 70S ribosomes.

Its subcellular location is the cytoplasm. Functionally, one of several proteins that assist in the late maturation steps of the functional core of the 30S ribosomal subunit. Associates with free 30S ribosomal subunits (but not with 30S subunits that are part of 70S ribosomes or polysomes). Required for efficient processing of 16S rRNA. May interact with the 5'-terminal helix region of 16S rRNA. The sequence is that of Ribosome-binding factor A from Bordetella bronchiseptica (strain ATCC BAA-588 / NCTC 13252 / RB50) (Alcaligenes bronchisepticus).